Consider the following 173-residue polypeptide: Putative metal-dependent hydrolase BCG9842_B2589 (173 aa).

Residues His65, His156, and His160 each contribute to the Zn(2+) site.

It belongs to the metal hydrolase YfiT family. In terms of assembly, homodimer. It depends on Zn(2+) as a cofactor.

Its subcellular location is the cytoplasm. In terms of biological role, possible metal-dependent hydrolase. The protein is Putative metal-dependent hydrolase BCG9842_B2589 of Bacillus cereus (strain G9842).